The chain runs to 484 residues: Phosphomethylpyrimidine synthase (484 aa).

Substrate contacts are provided by residues Asn-97, Met-126, Tyr-156, His-192, 212-214, 253-256, and Glu-292; these read SRG and DSLR. Position 296 (His-296) interacts with Zn(2+). A substrate-binding site is contributed by Tyr-319. His-360 contributes to the Zn(2+) binding site. Cys-440, Cys-443, and Cys-448 together coordinate [4Fe-4S] cluster.

It belongs to the ThiC family. The cofactor is [4Fe-4S] cluster.

It carries out the reaction 5-amino-1-(5-phospho-beta-D-ribosyl)imidazole + S-adenosyl-L-methionine = 4-amino-2-methyl-5-(phosphooxymethyl)pyrimidine + CO + 5'-deoxyadenosine + formate + L-methionine + 3 H(+). Its pathway is cofactor biosynthesis; thiamine diphosphate biosynthesis. Functionally, catalyzes the synthesis of the hydroxymethylpyrimidine phosphate (HMP-P) moiety of thiamine from aminoimidazole ribotide (AIR) in a radical S-adenosyl-L-methionine (SAM)-dependent reaction. The protein is Phosphomethylpyrimidine synthase of Synechococcus sp. (strain CC9605).